The chain runs to 389 residues: Agamous-like MADS-box protein AGL65 (389 aa).

The 61-residue stretch at 1-61 (MGRVKLKIKR…GRATAFHGEH (61 aa)) folds into the MADS-box domain. Coiled-coil stretches lie at residues 77–131 (QERT…LMEC) and 293–325 (GMEE…QQQD). Residues 310 to 343 (NLQQQQQQQQQQQQQDPSMYDPMANNNGGCFQIP) are disordered. The segment covering 312–324 (QQQQQQQQQQQQQ) has biased composition (low complexity).

Forms a heterodimer with AGL104. Expressed in pollen.

The protein localises to the nucleus. In terms of biological role, probable transcription factor that forms a heterodimer with the MADS-box protein AGL104 and is involved in the regulation of pollen maturation at the late stages of pollen development and pollen tube growth. This chain is Agamous-like MADS-box protein AGL65, found in Arabidopsis thaliana (Mouse-ear cress).